The following is a 411-amino-acid chain: Secretion apparatus protein BsaZ (411 aa).

The next 4 membrane-spanning stretches (helical) occupy residues 28–48 (IVAL…VDLT), 80–100 (IAAP…LVQS), 137–157 (ALLY…LYHA), and 175–195 (IVLT…VLIL). Residues 341–411 (AANRGGPPPE…APARTGDQNA (71 aa)) form a disordered region. The segment covering 370-404 (DACADNAFPDDAPPGAAAPNAGSPDSPAPDGGAPA) has biased composition (low complexity).

Belongs to the type III secretion exporter family.

The protein resides in the cell membrane. In terms of biological role, part of the bsa type III secretion system, is involved in the intracellular replication of invading bacteria inside the host cell. Probably necessary for the lysis of the vacuole membrane and escape into the host cell cytoplasm. The polypeptide is Secretion apparatus protein BsaZ (bsaZ) (Burkholderia pseudomallei (strain 1106a)).